Reading from the N-terminus, the 1211-residue chain is Homeodomain-interacting protein kinase 1 (1211 aa).

Lys25 participates in a covalent cross-link: Glycyl lysine isopeptide (Lys-Gly) (interchain with G-Cter in SUMO); alternate. Lys25 is covalently cross-linked (Glycyl lysine isopeptide (Lys-Gly) (interchain with G-Cter in SUMO2); alternate). Residues Lys120 and Lys124 each participate in a glycyl lysine isopeptide (Lys-Gly) (interchain with G-Cter in SUMO2) cross-link. The Protein kinase domain occupies 190–518 (YEVLEFLGRG…PLKTLNHQFV (329 aa)). Residues 196-204 (LGRGTFGQV) and Lys219 each bind ATP. Residue Asp315 is the Proton acceptor of the active site. A disordered region spans residues 835–856 (QQQSSSLPSRKNKQSAPVSSTS). The Nuclear localization signal 1 (NLS1) motif lies at 844-847 (RKNK). Ser872 is modified (phosphoserine). Residues 885–1094 (PVQDQHQPII…FQHGSPLHST (210 aa)) are interaction with TP53. The interval 891 to 998 (QPIIIPDTPS…PLKTQLGDCT (108 aa)) is required for localization to nuclear speckles. The interval 902 to 926 (PVSVITIRSDTDEEEDNKFKPSSSS) is SUMO interaction motifs (SIM); required for nuclear localization and kinase activity. Lys991 is covalently cross-linked (Glycyl lysine isopeptide (Lys-Gly) (interchain with G-Cter in SUMO2)). Disordered stretches follow at residues 1002–1023 (QASG…GQSS), 1047–1070 (LSQN…APRR), and 1085–1105 (FQHG…APAH). Composition is skewed to low complexity over residues 1048 to 1064 (SQNQ…ERSS) and 1096 to 1105 (HPHLAPAPAH). Ser1201 carries the phosphoserine modification. Lys1204 is covalently cross-linked (Glycyl lysine isopeptide (Lys-Gly) (interchain with G-Cter in SUMO)).

The protein belongs to the protein kinase superfamily. CMGC Ser/Thr protein kinase family. HIPK subfamily. Interacts with Nkx1-2, Nkx2-5, MYB, PARK7, DAXX and p53/TP53. Part of a cytoplasmic complex made of HIPK1, DAB2IP and MAP3K5 in response to TNF. This complex formation promotes MAP3K5-JNK activation and subsequent apoptosis. In terms of processing, phosphorylated and activated by JNK1. Autophosphorylated. Post-translationally, sumoylated. When conjugated it is directed to nuclear speckles. SENP1-mediated desumoylation is mediated by TNF in response to stress stimuli, triggering transient translocation from nucleus to cytoplasm.

The protein localises to the nucleus. It is found in the cytoplasm. Its subcellular location is the nucleus speckle. It carries out the reaction L-seryl-[protein] + ATP = O-phospho-L-seryl-[protein] + ADP + H(+). The enzyme catalyses L-threonyl-[protein] + ATP = O-phospho-L-threonyl-[protein] + ADP + H(+). Serine/threonine-protein kinase involved in transcription regulation and TNF-mediated cellular apoptosis. Plays a role as a corepressor for homeodomain transcription factors. Phosphorylates DAXX and MYB. Phosphorylates DAXX in response to stress, and mediates its translocation from the nucleus to the cytoplasm. Inactivates MYB transcription factor activity by phosphorylation. Prevents MAP3K5-JNK activation in the absence of TNF. TNF triggers its translocation to the cytoplasm in response to stress stimuli, thus activating nuclear MAP3K5-JNK by derepression and promoting apoptosis. May be involved in anti-oxidative stress responses. Involved in the regulation of eye size, lens formation and retinal lamination during late embryogenesis. Promotes angiogenesis and to be involved in erythroid differentiation. May be involved in malignant squamous cell tumor formation. Phosphorylates PAGE4 at 'Thr-51' which is critical for the ability of PAGE4 to potentiate the transcriptional activator activity of JUN. In Rattus norvegicus (Rat), this protein is Homeodomain-interacting protein kinase 1.